Reading from the N-terminus, the 1111-residue chain is uncharacterized protein (1111 aa).

A signal peptide spans 1–31; the sequence is MIRKLMKIPPFFTALFASAMFTLSVSQGVLA. 11 consecutive transmembrane segments (helical) span residues 490–510, 538–558, 572–592, 620–640, 644–664, 694–714, 797–817, 840–860, 885–905, 922–942, and 1003–1023; these read LPYLLMYFLGLFIVGGAIFKF, LALLLTAFLTLSSTLWFLAVC, FWHWSFSMAGYWWFFTFWISL, IIVVVVLLLNTSVFSNVTDAG, DVLGQINTIAALIFCAAIIAP, IPVGLIVLIVLGYYYTALNLI, FIWTALLGIFYYVWSDLVTVV, SITLFNLLVALVIVGITYVLV, ITTLLTYIFIAIGGAWAFATL, GLGFGMQEIFANFVSGIILLF, and LVISVGVAYGSDLTLVRQLLL.

This sequence belongs to the MscS (TC 1.A.23) family.

It localises to the cell membrane. This is an uncharacterized protein from Haemophilus influenzae (strain ATCC 51907 / DSM 11121 / KW20 / Rd).